The sequence spans 219 residues: MFIEIAGILGAADLRLADTVFAQKDAFESGARTAGRIARAVKNNEQAKPAGLAADLTMLVEKRLMKNDVFRAAARPRNFIRILLSRYTQGMAYGLHSDDAFMERQRVDLSFTLFLSPPESYEGGELIVEEPAGERLVKLEAGSLVLYPSATLHRVAEVTSGERRAAVGWIRSLVRSAEDRETLFDVALALRQAEAAGDRALTDRLLKIQGSLLRRWGED.

The Fe2OG dioxygenase domain occupies 78 to 172; that stretch reads NFIRILLSRY…RRAAVGWIRS (95 aa). Residues histidine 96, aspartate 98, and histidine 153 each coordinate Fe cation. Arginine 163 lines the 2-oxoglutarate pocket.

Fe(2+) is required as a cofactor. L-ascorbate serves as cofactor.

The sequence is that of PKHD-type hydroxylase Plav_0037 from Parvibaculum lavamentivorans (strain DS-1 / DSM 13023 / NCIMB 13966).